The following is a 509-amino-acid chain: Maturase K (509 aa).

It belongs to the intron maturase 2 family. MatK subfamily.

It localises to the plastid. The protein resides in the chloroplast. Its function is as follows. Usually encoded in the trnK tRNA gene intron. Probably assists in splicing its own and other chloroplast group II introns. In Citrus sinensis (Sweet orange), this protein is Maturase K.